The chain runs to 1157 residues: Folliculin-interacting protein 1 (1157 aa).

The 431-residue stretch at 37 to 467 folds into the uDENN FNIP1/2-type domain; that stretch reads FDPSQIRLIV…TVMPNGQPPI (431 aa). 4 disordered regions span residues 92 to 120, 616 to 665, 769 to 796, and 904 to 955; these read PGGD…CPKY, SQQE…TKVE, SPPT…NRDC, and VPHG…NYYG. Residues 95 to 111 are compositionally biased toward low complexity; sequence DSSSSLDSSINSSSSFS. The region spanning 475–1083 is the cDENN FNIP1/2-type domain; the sequence is SSQSVDMLAK…VSNLLHSTLQ (609 aa). Residues 651 to 664 are compositionally biased toward basic and acidic residues; the sequence is ADGHQPRTCQDTKV. Residues 904 to 916 show a composition bias toward basic and acidic residues; that stretch reads VPHGDRENAEKKV. Residues 1093-1148 enclose the dDENN FNIP1/2-type domain; that stretch reads FCVMHLEDRLQELYFKSKMLSEYLKGQMRVHVKELGVVLGIESSDLPLLAAVASTH.

The protein belongs to the FNIP family. In terms of assembly, homodimer and homomultimer. Heterodimer and heteromultimer with FNIP2. Component of the lysosomal folliculin complex (LFC).

The protein localises to the lysosome membrane. It is found in the cytoplasm. It localises to the cytosol. Binding partner of the GTPase-activating protein FLCN: involved in the cellular response to amino acid availability by regulating the non-canonical mTORC1 signaling cascade controlling the MiT/TFE factors TFEB and TFE3. Required to promote FLCN recruitment to lysosomes and interaction with Rag GTPases, leading to activation of the non-canonical mTORC1 signaling. In low-amino acid conditions, component of the lysosomal folliculin complex (LFC) on the membrane of lysosomes, which inhibits the GTPase-activating activity of FLCN, thereby inactivating mTORC1 and promoting nuclear translocation of TFEB and TFE3. Upon amino acid restimulation, disassembly of the LFC complex liberates the GTPase-activating activity of FLCN, leading to activation of mTORC1 and subsequent inactivation of TFEB and TFE3. In addition to its role in mTORC1 signaling, also acts as a co-chaperone of HSP90AA1/Hsp90: inhibits the ATPase activity of HSP90AA1/Hsp90, leading to activate both kinase and non-kinase client proteins of HSP90AA1/Hsp90. Acts as a scaffold to load client protein FLCN onto HSP90AA1/Hsp90. The chain is Folliculin-interacting protein 1 from Gallus gallus (Chicken).